We begin with the raw amino-acid sequence, 321 residues long: Lipoyl synthase (321 aa).

The [4Fe-4S] cluster site is built by Cys68, Cys73, Cys79, Cys94, Cys98, Cys101, and Ser308. Positions 80–297 (FNHGTATFMI…KVIAEDLGFS (218 aa)) constitute a Radical SAM core domain.

The protein belongs to the radical SAM superfamily. Lipoyl synthase family. [4Fe-4S] cluster is required as a cofactor.

The protein localises to the cytoplasm. It carries out the reaction [[Fe-S] cluster scaffold protein carrying a second [4Fe-4S](2+) cluster] + N(6)-octanoyl-L-lysyl-[protein] + 2 oxidized [2Fe-2S]-[ferredoxin] + 2 S-adenosyl-L-methionine + 4 H(+) = [[Fe-S] cluster scaffold protein] + N(6)-[(R)-dihydrolipoyl]-L-lysyl-[protein] + 4 Fe(3+) + 2 hydrogen sulfide + 2 5'-deoxyadenosine + 2 L-methionine + 2 reduced [2Fe-2S]-[ferredoxin]. The protein operates within protein modification; protein lipoylation via endogenous pathway; protein N(6)-(lipoyl)lysine from octanoyl-[acyl-carrier-protein]: step 2/2. Its function is as follows. Catalyzes the radical-mediated insertion of two sulfur atoms into the C-6 and C-8 positions of the octanoyl moiety bound to the lipoyl domains of lipoate-dependent enzymes, thereby converting the octanoylated domains into lipoylated derivatives. The sequence is that of Lipoyl synthase from Shewanella amazonensis (strain ATCC BAA-1098 / SB2B).